The chain runs to 327 residues: Geranylgeranyl transferase type-2 subunit alpha (327 aa).

PFTA repeat units lie at residues 44–78 (YSIE…SLAS), 84–118 (FWDK…HYPT), 123–157 (VWQT…NIES), 163–197 (LDKE…RMFQ), and 207–241 (YIRT…NDIV).

It belongs to the protein prenyltransferase subunit alpha family. Heterodimer of an alpha and a beta subunit.

The enzyme catalyses geranylgeranyl diphosphate + L-cysteinyl-[protein] = S-geranylgeranyl-L-cysteinyl-[protein] + diphosphate. In terms of biological role, catalyzes the transfer of a geranyl-geranyl moiety from geranyl-geranyl pyrophosphate to proteins having the C-terminal -XCC or -XCXC, where both cysteines may become modified. Acts on YPT1 and SEC4. The polypeptide is Geranylgeranyl transferase type-2 subunit alpha (BET4) (Saccharomyces cerevisiae (strain ATCC 204508 / S288c) (Baker's yeast)).